Reading from the N-terminus, the 268-residue chain is Tryptophan synthase alpha chain (268 aa).

Residues glutamate 49 and aspartate 60 each act as proton acceptor in the active site.

It belongs to the TrpA family. In terms of assembly, tetramer of two alpha and two beta chains.

The catalysed reaction is (1S,2R)-1-C-(indol-3-yl)glycerol 3-phosphate + L-serine = D-glyceraldehyde 3-phosphate + L-tryptophan + H2O. It participates in amino-acid biosynthesis; L-tryptophan biosynthesis; L-tryptophan from chorismate: step 5/5. Its function is as follows. The alpha subunit is responsible for the aldol cleavage of indoleglycerol phosphate to indole and glyceraldehyde 3-phosphate. In Yersinia pseudotuberculosis serotype O:3 (strain YPIII), this protein is Tryptophan synthase alpha chain.